The following is a 336-amino-acid chain: Di/tripeptide transport system permease protein DppB (336 aa).

Transmembrane regions (helical) follow at residues 10–30, 102–122, 145–165, 198–218, 257–277, and 307–327; these read GLLI…IRLI, LSLA…VIAA, IFWW…WTPV, AVRH…AVIA, LIPV…GAVL, and ILLV…LYGL. The ABC transmembrane type-1 domain occupies 96-325; it reads FPATLELSLA…LVNFVVDILY (230 aa).

Belongs to the binding-protein-dependent transport system permease family. OppBC subfamily. The complex is composed of two ATP-binding proteins (DppD and DppF), two transmembrane proteins (DppB and DppC) and a solute-binding protein (DppA1-A5). Five orthologous SBPs (DppA1-A5) are present in P.aeruginosa, which increases the substrate specificity of the DppBCDF transporter.

Its subcellular location is the cell inner membrane. In terms of biological role, part of the ABC transporter DppABCDF involved in the uptake of various di/tripeptides. Is also involved in the uptake of phaseolotoxin, a toxic tripeptide inhibiting the enzyme ornithine carbamoyltransferase. Responsible for the translocation of the substrate across the membrane. The chain is Di/tripeptide transport system permease protein DppB from Pseudomonas aeruginosa (strain UCBPP-PA14).